A 179-amino-acid chain; its full sequence is Adaptation to cold protein A (179 aa).

The tract at residues 133–179 is disordered; the sequence is KATPAPKRSADDDFEDEDSDYADYSDDDDDEGEEEDGYYDHYDDEDR. The span at 144–179 shows a compositional bias: acidic residues; that stretch reads DDFEDEDSDYADYSDDDDDEGEEEDGYYDHYDDEDR.

Functionally, part of an operon involved in cold adaptation. The protein is Adaptation to cold protein A of Shewanella oneidensis (strain ATCC 700550 / JCM 31522 / CIP 106686 / LMG 19005 / NCIMB 14063 / MR-1).